A 355-amino-acid polypeptide reads, in one-letter code: MHC class I-like protein MILL2 (355 aa).

Residues 1–29 (MKASSGKPREFRPAVLLLILGLLLRDSRG) form the signal peptide. The segment at 46–137 (RLTRTHTLRY…VINQKSQEEG (92 aa)) is alpha-1. 3 disulfide bridges follow: Cys-96/Cys-107, Cys-147/Cys-210, and Cys-249/Cys-306. 2 N-linked (GlcNAc...) asparagine glycosylation sites follow: Asn-104 and Asn-152. The alpha-2 stretch occupies residues 138-229 (LHTLQATLGC…SLRNGLQDTG (92 aa)). Residues 230–323 (PPMVTVTCRN…SIMQTAVSGH (94 aa)) are alpha-3. Residues 231–321 (PMVTVTCRNY…NHSIMQTAVS (91 aa)) enclose the Ig-like C1-type domain. A glycan (N-linked (GlcNAc...) asparagine) is linked at Asn-312. The tract at residues 324-329 (AAEDSQ) is connecting peptide. Asp-330 is lipidated: GPI-anchor amidated aspartate. Residues 331 to 355 (VASSATASAGSALPVVLAVALARAN) constitute a propeptide, removed in mature form.

It belongs to the MHC class I family. As to quaternary structure, heterodimer with B2M (beta-2-microglobulin). Post-translationally, N-glycosylated. Ubiquitously expressed in neonatal and adult tissues.

The protein resides in the cell membrane. Functionally, binds to heparan sulfate proteoglycans on the surface of fibroblast (NIH-3T3) cells. The polypeptide is MHC class I-like protein MILL2 (Mus musculus (Mouse)).